Consider the following 92-residue polypeptide: Small ribosomal subunit protein uS19 (92 aa).

It belongs to the universal ribosomal protein uS19 family.

Its function is as follows. Protein S19 forms a complex with S13 that binds strongly to the 16S ribosomal RNA. This is Small ribosomal subunit protein uS19 from Macrococcus caseolyticus (strain JCSC5402) (Macrococcoides caseolyticum).